The chain runs to 50 residues: Fungus-induced protein 3 (50 aa).

This Caenorhabditis elegans protein is Fungus-induced protein 3 (fip-3).